Consider the following 244-residue polypeptide: MKIDLNADLGEGCASDAELLTLVSSANIACGFHAGDAQTMQACVREAIKNGVAIGAHPSFPDRENFGRSAMQLPPETVYAQTLYQIGALATIARAQGGVMRHVKPHGMLYNQTAKEAQLADAIARAVYACDPALVLVGLAGSELIRAGKQYGLTTREEVFADRGYQADGSLVPRSQPGALIENEEQALAQTLEMVQHGRVKSITGEWATVTAQTVCLHGDGEHALAFARRLRSTFAEKEIVVAA.

Belongs to the LamB/PxpA family. In terms of assembly, forms a complex composed of PxpA, PxpB and PxpC.

It catalyses the reaction 5-oxo-L-proline + ATP + 2 H2O = L-glutamate + ADP + phosphate + H(+). Its function is as follows. Catalyzes the cleavage of 5-oxoproline to form L-glutamate coupled to the hydrolysis of ATP to ADP and inorganic phosphate. This chain is 5-oxoprolinase subunit A, found in Shigella boydii serotype 18 (strain CDC 3083-94 / BS512).